A 471-amino-acid chain; its full sequence is Tryptophanase (471 aa).

Residue Lys-256 is modified to N6-(pyridoxal phosphate)lysine.

This sequence belongs to the beta-eliminating lyase family. Homotetramer. Pyridoxal 5'-phosphate is required as a cofactor.

The enzyme catalyses L-tryptophan + H2O = indole + pyruvate + NH4(+). It functions in the pathway amino-acid degradation; L-tryptophan degradation via pyruvate pathway; indole and pyruvate from L-tryptophan: step 1/1. The chain is Tryptophanase from Salinibacter ruber (strain DSM 13855 / M31).